The chain runs to 233 residues: Cytidylate kinase (233 aa).

Residue 15–23 (GPSGAGKSS) participates in ATP binding. Basic and acidic residues predominate over residues 183–200 (QRDRQDEGREHAPLKQAE). Residues 183-203 (QRDRQDEGREHAPLKQAEDAV) are disordered.

It belongs to the cytidylate kinase family. Type 1 subfamily.

The protein resides in the cytoplasm. It catalyses the reaction CMP + ATP = CDP + ADP. The enzyme catalyses dCMP + ATP = dCDP + ADP. The protein is Cytidylate kinase of Geobacter sp. (strain M21).